The following is a 250-amino-acid chain: Probable transcriptional regulatory protein Paes_0496 (250 aa).

It belongs to the TACO1 family.

It is found in the cytoplasm. In Prosthecochloris aestuarii (strain DSM 271 / SK 413), this protein is Probable transcriptional regulatory protein Paes_0496.